Reading from the N-terminus, the 188-residue chain is MKIGVLGVQGDVREHVEALHKLGVETLIVKLPEQLDMVDGLILPGGESTTMIRILKEMDMDEKLVERINNGLPVFATCAGVILLAKRIENYSQEKLGVLDITVERNAYGRQVESFETFVEIPAVGKDPFRAIFIRAPRIVETGKNVEILATYDYDPVLVKEGNILACTFHPELTDDLRLHRYFLEMVK.

An L-glutamine-binding site is contributed by 46–48 (GES). The active-site Nucleophile is Cys78. Residues Arg105 and 134-135 (IR) each bind L-glutamine. Active-site charge relay system residues include His170 and Glu172.

It belongs to the glutaminase PdxT/SNO family. As to quaternary structure, in the presence of PdxS, forms a dodecamer of heterodimers. Only shows activity in the heterodimer.

It catalyses the reaction aldehydo-D-ribose 5-phosphate + D-glyceraldehyde 3-phosphate + L-glutamine = pyridoxal 5'-phosphate + L-glutamate + phosphate + 3 H2O + H(+). The catalysed reaction is L-glutamine + H2O = L-glutamate + NH4(+). The protein operates within cofactor biosynthesis; pyridoxal 5'-phosphate biosynthesis. In terms of biological role, catalyzes the hydrolysis of glutamine to glutamate and ammonia as part of the biosynthesis of pyridoxal 5'-phosphate. The resulting ammonia molecule is channeled to the active site of PdxS. The sequence is that of Pyridoxal 5'-phosphate synthase subunit PdxT from Thermotoga sp. (strain RQ2).